The chain runs to 89 residues: Small ribosomal subunit protein uS15 (89 aa).

Belongs to the universal ribosomal protein uS15 family. As to quaternary structure, part of the 30S ribosomal subunit. Forms a bridge to the 50S subunit in the 70S ribosome, contacting the 23S rRNA.

Functionally, one of the primary rRNA binding proteins, it binds directly to 16S rRNA where it helps nucleate assembly of the platform of the 30S subunit by binding and bridging several RNA helices of the 16S rRNA. Forms an intersubunit bridge (bridge B4) with the 23S rRNA of the 50S subunit in the ribosome. This is Small ribosomal subunit protein uS15 from Chlorobium chlorochromatii (strain CaD3).